The chain runs to 268 residues: Shikimate dehydrogenase (NADP(+)) (268 aa).

Shikimate contacts are provided by residues 14-16 (SKS) and Thr61. Lys65 acts as the Proton acceptor in catalysis. Asn86 and Asp102 together coordinate shikimate. NADP(+)-binding positions include 126–130 (GAGGA), 149–154 (NRTFSK), and Met213. Tyr215 is a shikimate binding site. Gly238 is a binding site for NADP(+).

This sequence belongs to the shikimate dehydrogenase family. Homodimer.

It catalyses the reaction shikimate + NADP(+) = 3-dehydroshikimate + NADPH + H(+). It functions in the pathway metabolic intermediate biosynthesis; chorismate biosynthesis; chorismate from D-erythrose 4-phosphate and phosphoenolpyruvate: step 4/7. Involved in the biosynthesis of the chorismate, which leads to the biosynthesis of aromatic amino acids. Catalyzes the reversible NADPH linked reduction of 3-dehydroshikimate (DHSA) to yield shikimate (SA). The chain is Shikimate dehydrogenase (NADP(+)) from Haemophilus influenzae (strain PittEE).